A 160-amino-acid polypeptide reads, in one-letter code: Siroheme decarboxylase NirH subunit (160 aa).

The protein belongs to the Ahb/Nir family. Forms a complex composed of NirDL, NirG and NirH. All proteins are required for the total conversion of siroheme to didecarboxysiroheme.

It carries out the reaction siroheme + 2 H(+) = 12,18-didecarboxysiroheme + 2 CO2. It participates in porphyrin-containing compound metabolism. In terms of biological role, involved in heme d1 biosynthesis. Catalyzes the decarboxylation of siroheme into didecarboxysiroheme. Siroheme is probably decarboxylated to monodecarboxysiroheme, which is in turn decarboxylated to didecarboxysiroheme. The protein is Siroheme decarboxylase NirH subunit of Paracoccus pantotrophus (Thiosphaera pantotropha).